Reading from the N-terminus, the 596-residue chain is Probable lysosomal cobalamin transporter (596 aa).

10 consecutive transmembrane segments (helical) span residues 7-27 (AFIWVAYAVAVGIVALIAAIF), 46-66 (IITLTSLLATVLLLPVDIALV), 95-115 (IVYYALYSLDAVLCLLVIPFT), 145-165 (TLFFVVLVVILFLVGFFAPVA), 196-216 (LLISLGTLLYILYTSVGLALL), 313-333 (LVGGILLLLLSVIIWASMLIT), 350-370 (ILGSINIFQPLNWVFVKSSIV), 376-396 (VLMALLVLFLFSSSVTGIAVI), 420-440 (MATVMLTLIILAINYSIAMII), and 507-527 (FFGALAFWAQFVFLAIFLIVF). The segment at 566-596 (WQDIRGKAKNQTPSRGAAGRGIRGDDDHDDD) is disordered. Over residues 587–596 (IRGDDDHDDD) the composition is skewed to basic and acidic residues.

It belongs to the LIMR family. LMBRD1 subfamily.

It localises to the lysosome membrane. In terms of biological role, probable lysosomal cobalamin transporter. Required to export cobalamin from lysosomes allowing its conversion to cofactors. The polypeptide is Probable lysosomal cobalamin transporter (Sclerotinia sclerotiorum (strain ATCC 18683 / 1980 / Ss-1) (White mold)).